The following is a 101-amino-acid chain: RNA-binding protein Hfq (101 aa).

In terms of domain architecture, Sm spans 9–68; that stretch reads DPFLNALRRERVPVSIYLVNGIKLQGQVESFDQFVILLKNTVSQMVYKHAISTVVPSRPV. A disordered region spans residues 63-101; the sequence is VPSRPVSHHSNNPSGSTNNYHGSNPSAPQQPQQDSDDAE. Residues 70–86 are compositionally biased toward polar residues; it reads HHSNNPSGSTNNYHGSN.

This sequence belongs to the Hfq family. As to quaternary structure, homohexamer.

In terms of biological role, RNA chaperone that binds small regulatory RNA (sRNAs) and mRNAs to facilitate mRNA translational regulation in response to envelope stress, environmental stress and changes in metabolite concentrations. Also binds with high specificity to tRNAs. Positively regulates the expression of the yst gene for heat-stable enterotoxin (Y-ST). This is RNA-binding protein Hfq from Yersinia enterocolitica.